A 204-amino-acid chain; its full sequence is Translation initiation factor 2 subunit beta (204 aa).

The 59-residue stretch at 146-204 folds into the TRAM domain; sequence NLEEGQVLDVEIQSLSKRGDGVVKMGRYIMYVSNAKPGQSVKIKISRISGSIVFTERAE.

It belongs to the eIF-2-beta/eIF-5 family. As to quaternary structure, heterotrimer composed of an alpha, a beta and a gamma chain.

Functionally, eIF-2 functions in the early steps of protein synthesis by forming a ternary complex with GTP and initiator tRNA. The sequence is that of Translation initiation factor 2 subunit beta from Methanoregula boonei (strain DSM 21154 / JCM 14090 / 6A8).